The following is a 100-amino-acid chain: Replication restart protein PriB (100 aa).

An SSB domain is found at methionine 1 to isoleucine 100.

The protein belongs to the PriB family. As to quaternary structure, homodimer. Interacts with PriA and DnaT. Component of the replication restart primosome. Primosome assembly occurs via a 'hand-off' mechanism. PriA binds to replication forks, subsequently PriB then DnaT bind; DnaT then displaces ssDNA to generate the helicase loading substrate.

Functionally, involved in the restart of stalled replication forks, which reloads the replicative helicase on sites other than the origin of replication; the PriA-PriB pathway is the major replication restart pathway. During primosome assembly it facilitates complex formation between PriA and DnaT on DNA; stabilizes PriA on DNA. Stimulates the DNA unwinding activity of PriA helicase. The sequence is that of Replication restart protein PriB from Vibrio cholerae serotype O1 (strain ATCC 39315 / El Tor Inaba N16961).